Consider the following 76-residue polypeptide: Acyl carrier protein (76 aa).

The region spanning 1–76 is the Carrier domain; it reads MSLEEKVKNI…DVIEYIKAHT (76 aa). S36 is modified (O-(pantetheine 4'-phosphoryl)serine).

The protein belongs to the acyl carrier protein (ACP) family. 4'-phosphopantetheine is transferred from CoA to a specific serine of apo-ACP by AcpS. This modification is essential for activity because fatty acids are bound in thioester linkage to the sulfhydryl of the prosthetic group.

The protein localises to the cytoplasm. Its pathway is lipid metabolism; fatty acid biosynthesis. In terms of biological role, carrier of the growing fatty acid chain in fatty acid biosynthesis. The protein is Acyl carrier protein of Desulfatibacillum aliphaticivorans.